Here is a 204-residue protein sequence, read N- to C-terminus: UPF0637 protein lwe1043 (204 aa).

Belongs to the UPF0637 family.

The protein is UPF0637 protein lwe1043 of Listeria welshimeri serovar 6b (strain ATCC 35897 / DSM 20650 / CCUG 15529 / CIP 8149 / NCTC 11857 / SLCC 5334 / V8).